The following is a 256-amino-acid chain: MKLISTIAAATTAFGAPNADHTSRQLIFGGGIIPSGTKTYTAGIRTSADGDTYCGGSLISPTHVLTTSICTGYKEPKFVSVGTHYLNGTQDGEQIKVVSAQNHTSLNFSSGTYDFALLTLEKPSKFIPVKLPKADDSDIKPGMWSKAMGWGVTSYPNGSLSYELQGVSLEVWANDECSQVFNIGDTSVCAGGLPGKDACVADTGGPLIKENGLGDLDDILIGLVNWGYGCGDAGSPTVYSRVSTATEWINSVTKGQ.

The signal sequence occupies residues 1-15 (MKLISTIAAATTAFG). The Peptidase S1 domain maps to 27–254 (IFGGGIIPSG…ATEWINSVTK (228 aa)). Cys-54 and Cys-70 are disulfide-bonded. Asn-87, Asn-102, Asn-107, and Asn-157 each carry an N-linked (GlcNAc...) asparagine glycan. 2 disulfides stabilise this stretch: Cys-177-Cys-189 and Cys-199-Cys-230.

It belongs to the peptidase S1 family. In terms of assembly, forms an apoplastic complex with host endoglucanases in tomato leaves during P.infestans infection.

It is found in the secreted. In terms of biological role, secreted effector that suppresses host plant glucan elicitor-mediated defense responses. Targets host endoglucanases and inhibits the endoglucanase-mediated release of elicitor-active glucan oligosaccharides from P.infestans cell walls. The polypeptide is Glucanase inhibitor protein 2 (Phytophthora infestans (Potato late blight agent)).